A 149-amino-acid polypeptide reads, in one-letter code: Large ribosomal subunit protein bL9 (149 aa).

This sequence belongs to the bacterial ribosomal protein bL9 family.

Its function is as follows. Binds to the 23S rRNA. The chain is Large ribosomal subunit protein bL9 from Clostridioides difficile (strain 630) (Peptoclostridium difficile).